We begin with the raw amino-acid sequence, 879 residues long: Alanine--tRNA ligase (879 aa).

Zn(2+) is bound by residues histidine 565, histidine 569, cysteine 674, and histidine 678.

The protein belongs to the class-II aminoacyl-tRNA synthetase family. Zn(2+) serves as cofactor.

The protein localises to the cytoplasm. The enzyme catalyses tRNA(Ala) + L-alanine + ATP = L-alanyl-tRNA(Ala) + AMP + diphosphate. In terms of biological role, catalyzes the attachment of alanine to tRNA(Ala) in a two-step reaction: alanine is first activated by ATP to form Ala-AMP and then transferred to the acceptor end of tRNA(Ala). Also edits incorrectly charged Ser-tRNA(Ala) and Gly-tRNA(Ala) via its editing domain. In Gluconobacter oxydans (strain 621H) (Gluconobacter suboxydans), this protein is Alanine--tRNA ligase.